The chain runs to 732 residues: Phosphoribosylformylglycinamidine synthase subunit PurL (732 aa).

Residue H32 is part of the active site. Position 35 (Y35) interacts with ATP. E81 contributes to the Mg(2+) binding site. Substrate-binding positions include 82–85 and R104; that span reads SHNH. H83 functions as the Proton acceptor in the catalytic mechanism. D105 contributes to the Mg(2+) binding site. Q230 contacts substrate. D258 contacts Mg(2+). A substrate-binding site is contributed by 302–304; it reads ESQ. 2 residues coordinate ATP: D485 and G522. A Mg(2+)-binding site is contributed by N523. S525 provides a ligand contact to substrate.

Belongs to the FGAMS family. Monomer. Part of the FGAM synthase complex composed of 1 PurL, 1 PurQ and 2 PurS subunits.

The protein resides in the cytoplasm. The enzyme catalyses N(2)-formyl-N(1)-(5-phospho-beta-D-ribosyl)glycinamide + L-glutamine + ATP + H2O = 2-formamido-N(1)-(5-O-phospho-beta-D-ribosyl)acetamidine + L-glutamate + ADP + phosphate + H(+). Its pathway is purine metabolism; IMP biosynthesis via de novo pathway; 5-amino-1-(5-phospho-D-ribosyl)imidazole from N(2)-formyl-N(1)-(5-phospho-D-ribosyl)glycinamide: step 1/2. Its function is as follows. Part of the phosphoribosylformylglycinamidine synthase complex involved in the purines biosynthetic pathway. Catalyzes the ATP-dependent conversion of formylglycinamide ribonucleotide (FGAR) and glutamine to yield formylglycinamidine ribonucleotide (FGAM) and glutamate. The FGAM synthase complex is composed of three subunits. PurQ produces an ammonia molecule by converting glutamine to glutamate. PurL transfers the ammonia molecule to FGAR to form FGAM in an ATP-dependent manner. PurS interacts with PurQ and PurL and is thought to assist in the transfer of the ammonia molecule from PurQ to PurL. The protein is Phosphoribosylformylglycinamidine synthase subunit PurL of Methanococcus aeolicus (strain ATCC BAA-1280 / DSM 17508 / OCM 812 / Nankai-3).